The primary structure comprises 93 residues: Alpha-defensin 21 (93 aa).

The N-terminal stretch at 1 to 19 (MKTLVLLSALILLAYQVQT) is a signal peptide. Positions 20-58 (DPIQNTDEETNTEEQPGEDDQAVSVSFGGQEGSALHEKL) are excised as a propeptide. A disordered region spans residues 22–43 (IQNTDEETNTEEQPGEDDQAVS). A compositionally biased stretch (acidic residues) spans 25 to 40 (TDEETNTEEQPGEDDQ). 3 disulfides stabilise this stretch: cysteine 64/cysteine 89, cysteine 66/cysteine 81, and cysteine 71/cysteine 88.

It belongs to the alpha-defensin family.

It is found in the secreted. Its function is as follows. May have microbicidal activities. The polypeptide is Alpha-defensin 21 (Defa21) (Mus musculus (Mouse)).